Consider the following 901-residue polypeptide: Protein translocase subunit SecA (901 aa).

Residues glutamine 87, 105-109 (GEGKT), and aspartate 512 contribute to the ATP site. The tract at residues 852–901 (AQMQQLSHQSDDEAAAQDLAAQTGERKVGRNDPCPCGSGKKYKQCHGRLS) is disordered. Residues cysteine 885, cysteine 887, cysteine 896, and histidine 897 each coordinate Zn(2+). Basic residues predominate over residues 891-901 (KKYKQCHGRLS).

It belongs to the SecA family. In terms of assembly, monomer and homodimer. Part of the essential Sec protein translocation apparatus which comprises SecA, SecYEG and auxiliary proteins SecDF-YajC and YidC. Requires Zn(2+) as cofactor.

The protein resides in the cell inner membrane. It localises to the cytoplasm. It catalyses the reaction ATP + H2O + cellular proteinSide 1 = ADP + phosphate + cellular proteinSide 2.. In terms of biological role, part of the Sec protein translocase complex. Interacts with the SecYEG preprotein conducting channel. Has a central role in coupling the hydrolysis of ATP to the transfer of proteins into and across the cell membrane, serving both as a receptor for the preprotein-SecB complex and as an ATP-driven molecular motor driving the stepwise translocation of polypeptide chains across the membrane. The sequence is that of Protein translocase subunit SecA from Klebsiella pneumoniae subsp. pneumoniae (strain ATCC 700721 / MGH 78578).